A 314-amino-acid chain; its full sequence is UDP-3-O-acyl-N-acetylglucosamine deacetylase (314 aa).

Zn(2+)-binding residues include histidine 82, histidine 239, and aspartate 243. The active-site Proton donor is histidine 266.

Belongs to the LpxC family. Zn(2+) serves as cofactor.

The catalysed reaction is a UDP-3-O-[(3R)-3-hydroxyacyl]-N-acetyl-alpha-D-glucosamine + H2O = a UDP-3-O-[(3R)-3-hydroxyacyl]-alpha-D-glucosamine + acetate. The protein operates within glycolipid biosynthesis; lipid IV(A) biosynthesis; lipid IV(A) from (3R)-3-hydroxytetradecanoyl-[acyl-carrier-protein] and UDP-N-acetyl-alpha-D-glucosamine: step 2/6. Catalyzes the hydrolysis of UDP-3-O-myristoyl-N-acetylglucosamine to form UDP-3-O-myristoylglucosamine and acetate, the committed step in lipid A biosynthesis. The sequence is that of UDP-3-O-acyl-N-acetylglucosamine deacetylase from Myxococcus xanthus (strain DK1622).